The following is a 587-amino-acid chain: L-ornithine N(5)-monooxygenase (587 aa).

FAD contacts are provided by residues Glu-53 to His-61 and Gln-72. Lys-77 contributes to the substrate binding site. NADP(+) is bound at residue Gly-235 to Ser-238. Substrate-binding positions include Asn-282–Phe-285 and Asn-312. NADP(+) is bound at residue Asn-312 to Ser-314. Positions Asp-488–Lys-511 are disordered. Positions Ala-491–Pro-505 are enriched in polar residues. Position 567–569 (Thr-567–Leu-569) interacts with FAD. A substrate-binding site is contributed by Ser-570.

Belongs to the lysine N(6)-hydroxylase/L-ornithine N(5)-oxygenase family. As to quaternary structure, homotetramer. FAD is required as a cofactor.

The enzyme catalyses L-ornithine + NADPH + O2 = N(5)-hydroxy-L-ornithine + NADP(+) + H2O. It carries out the reaction L-ornithine + NADH + O2 = N(5)-hydroxy-L-ornithine + NAD(+) + H2O. The protein operates within siderophore biosynthesis; ferrichrome biosynthesis. Functionally, L-ornithine N(5)-monooxygenase; part of the siderophore biosynthetic pathway. Omphalotus olearius produces ferrichrome A, but no other siderophore has been detected. Ferrichrome A consists of a hexapeptide ring made up of one glycine, two serine, and three N(5)-hydroxyornithine amino acid residues, the latter acylated by trans-(alpha-methyl)-glutaconic acid residues. The biosynthesis of ferrichrome A depends on the hydroxylation of ornithine to N(5)-hydroxyornithine, catalyzed by the monooxygenase omo1. The second step, the acylation of N(5)-hydroxy-L-ornithine is probably catalyzed by the N-acyltransferase ato1. Finally, assembly of ferrichrome A is catalyzed by the nonribosomal peptide synthase (NRPS) fso1. This is L-ornithine N(5)-monooxygenase from Omphalotus olearius (Jack o'lantern).